The primary structure comprises 1475 residues: ABC transporter G family member 15 (1475 aa).

Positions 1–10 (MDSNENKKNG) are enriched in basic and acidic residues. 2 disordered regions span residues 1-40 (MDSN…EEHI) and 75-94 (NIKN…GGGA). The span at 17–34 (NIINNNNDNNNNNDNNNN) shows a compositional bias: low complexity. A coiled-coil region spans residues 25-67 (NNNNNDNNNNSTEEHIESVEQSIKEFNNVANELETEFRDYLVE). Residues 155–404 (LNVKNWFKKS…FIDMGFECEP (250 aa)) form the ABC transporter 1 domain. Positions 507-753 (WGDKFSLISR…FTGERYLEKS (247 aa)) constitute an ABC transmembrane type-2 1 domain. The next 5 helical transmembrane spans lie at 596 to 616 (IPII…MFGL), 623 to 641 (FFIN…NNLY), 653 to 673 (IGQN…SYII), 680 to 699 (VWFG…RALM), and 770 to 790 (ICIV…VLNI). Residues 842 to 1087 (FTWQHMYYSV…LTSYFQRHGV (246 aa)) form the ABC transporter 2 domain. Residue 879–886 (GSSGAGKT) coordinates ATP. A run of 6 helical transmembrane segments spans residues 1180–1200 (GYSY…GWTF), 1216–1236 (FIFN…PQFI), 1256–1276 (FALS…TIFF), 1293–1313 (FFFW…GQAI), 1323–1343 (ALNL…VLVI), and 1449–1469 (FGII…FVFL). The ABC transmembrane type-2 2 domain occupies 1180–1404 (GYSYGTFIQS…TCSDYAFEFL (225 aa)).

The protein belongs to the ABC transporter superfamily. ABCG family. PDR (TC 3.A.1.205) subfamily.

It is found in the membrane. This chain is ABC transporter G family member 15 (abcG15), found in Dictyostelium discoideum (Social amoeba).